A 305-amino-acid polypeptide reads, in one-letter code: Putative S-adenosyl-L-methionine-dependent methyltransferase MAB_3787 (305 aa).

S-adenosyl-L-methionine is bound by residues D132 and 161–162 (DL).

It belongs to the UPF0677 family.

Its function is as follows. Exhibits S-adenosyl-L-methionine-dependent methyltransferase activity. The protein is Putative S-adenosyl-L-methionine-dependent methyltransferase MAB_3787 of Mycobacteroides abscessus (strain ATCC 19977 / DSM 44196 / CCUG 20993 / CIP 104536 / JCM 13569 / NCTC 13031 / TMC 1543 / L948) (Mycobacterium abscessus).